Consider the following 29-residue polypeptide: Cytochrome b6-f complex subunit 8 (29 aa).

The helical transmembrane segment at 3–23 (IVSLAWAALMIVFTFSLSLVV) threads the bilayer.

Belongs to the PetN family. As to quaternary structure, the 4 large subunits of the cytochrome b6-f complex are cytochrome b6, subunit IV (17 kDa polypeptide, PetD), cytochrome f and the Rieske protein, while the 4 small subunits are PetG, PetL, PetM and PetN. The complex functions as a dimer.

It is found in the plastid membrane. Its function is as follows. Component of the cytochrome b6-f complex, which mediates electron transfer between photosystem II (PSII) and photosystem I (PSI), cyclic electron flow around PSI, and state transitions. The protein is Cytochrome b6-f complex subunit 8 of Cuscuta exaltata (Tall dodder).